A 121-amino-acid polypeptide reads, in one-letter code: Phosphoribosyl-ATP pyrophosphatase (121 aa).

This sequence belongs to the PRA-PH family.

Its subcellular location is the cytoplasm. It carries out the reaction 1-(5-phospho-beta-D-ribosyl)-ATP + H2O = 1-(5-phospho-beta-D-ribosyl)-5'-AMP + diphosphate + H(+). Its pathway is amino-acid biosynthesis; L-histidine biosynthesis; L-histidine from 5-phospho-alpha-D-ribose 1-diphosphate: step 2/9. The protein is Phosphoribosyl-ATP pyrophosphatase of Burkholderia multivorans (strain ATCC 17616 / 249).